We begin with the raw amino-acid sequence, 475 residues long: Ribulose bisphosphate carboxylase large chain (475 aa).

At lysine 14 the chain carries N6,N6,N6-trimethyllysine. Residues asparagine 123 and threonine 173 each contribute to the substrate site. Residue lysine 175 is the Proton acceptor of the active site. Lysine 177 lines the substrate pocket. Mg(2+) is bound by residues lysine 201, aspartate 203, and glutamate 204. Lysine 201 is subject to N6-carboxylysine. Histidine 294 acts as the Proton acceptor in catalysis. Substrate-binding residues include arginine 295, histidine 327, and serine 379.

Belongs to the RuBisCO large chain family. Type I subfamily. As to quaternary structure, heterohexadecamer of 8 large chains and 8 small chains; disulfide-linked. The disulfide link is formed within the large subunit homodimers. It depends on Mg(2+) as a cofactor. The disulfide bond which can form in the large chain dimeric partners within the hexadecamer appears to be associated with oxidative stress and protein turnover.

Its subcellular location is the plastid. The enzyme catalyses 2 (2R)-3-phosphoglycerate + 2 H(+) = D-ribulose 1,5-bisphosphate + CO2 + H2O. The catalysed reaction is D-ribulose 1,5-bisphosphate + O2 = 2-phosphoglycolate + (2R)-3-phosphoglycerate + 2 H(+). In terms of biological role, ruBisCO catalyzes two reactions: the carboxylation of D-ribulose 1,5-bisphosphate, the primary event in carbon dioxide fixation, as well as the oxidative fragmentation of the pentose substrate in the photorespiration process. Both reactions occur simultaneously and in competition at the same active site. The polypeptide is Ribulose bisphosphate carboxylase large chain (rbcL) (Euglena longa (Euglenophycean alga)).